A 521-amino-acid polypeptide reads, in one-letter code: MELASAHLHKGQVPWGGLLLTASLLASWSPATTAEVTIEAVPPQVAEDNNVLLLVHNLPLALGAFAWYKGNTTAIDKEIARFVPNSNMNFTGQAYSGREIIYSNGSLLFQMITMKDMGVYTLDMTDENYRRTQATVRFHVHPILLKPNITSNNSNPVEGDDSVSLTCDSYTDPDNINYLWSRNGESLSEGDRLKLSEGNRTLTLLNVTRNDTGPYVCETRNPVSVNRSDPFSLNIIYGPDTPIISPSDIYLHPGSNLNLSCHAASNPPAQYFWLINEKPHASSQELFIPNITTNNSGTYTCFVNNSVTGLSRTTVKNITVLEPVTQPFLQVTNTTVKELDSVTLTCLSNDIGANIQWLFNSQSLQLTERMTLSQNNSILRIDPIKREDAGEYQCEISNPVSVRRSNSIKLDIIFDPTQGGLSDGAIAGIVIGVVAGVALIAGLAYFLYSRKSGGGSDQRDLTEHKPSTSNHNLAPSDNSPNKVDDVAYTVLNFNSQQPNRPTSAPSSPRATETVYSEVKKK.

The signal sequence occupies residues 1–34 (MELASAHLHKGQVPWGGLLLTASLLASWSPATTA). In terms of domain architecture, Ig-like V-type spans 35 to 142 (EVTIEAVPPQ…QATVRFHVHP (108 aa)). Topologically, residues 35 to 428 (EVTIEAVPPQ…GGLSDGAIAG (394 aa)) are extracellular. The interval 39–142 (EAVPPQVAED…QATVRFHVHP (104 aa)) is required for homophilic binding. Residues Asn71, Asn89, Asn104, Asn148, Asn152, Asn199, Asn206, Asn210, Asn226, Asn258, Asn290, Asn294, Asn304, Asn317, Asn333, and Asn375 are each glycosylated (N-linked (GlcNAc...) asparagine). 3 Ig-like C2-type domains span residues 147–234 (PNIT…FSLN), 239–319 (PDTP…KNIT), and 323–411 (PVTQ…IKLD). The cysteines at positions 167 and 217 are disulfide-linked. Residues Cys261 and Cys301 are joined by a disulfide bond. A disulfide bridge links Cys346 with Cys394. The helical transmembrane segment at 429–447 (IVIGVVAGVALIAGLAYFL) threads the bilayer. The interaction with calmodulin stretch occupies residues 445-457 (YFLYSRKSGGGSD). Residues 447–521 (LYSRKSGGGS…ETVYSEVKKK (75 aa)) form an interaction with FLNA region. The Cytoplasmic segment spans residues 448 to 521 (YSRKSGGGSD…ETVYSEVKKK (74 aa)). Residues 455–521 (GSDQRDLTEH…ETVYSEVKKK (67 aa)) form a disordered region. Residues 457 to 466 (DQRDLTEHKP) are compositionally biased toward basic and acidic residues. Positions 467–481 (STSNHNLAPSDNSPN) are enriched in polar residues. Residues 484-521 (DDVAYTVLNFNSQQPNRPTSAPSSPRATETVYSEVKKK) form a required for interaction with PTPN11 and PTPN6 and for control of phosphorylation level region. Tyr488 is modified (phosphotyrosine; by SRC, LCK, INSR and EGFR). Polar residues predominate over residues 491 to 514 (LNFNSQQPNRPTSAPSSPRATETV). Ser503 carries the post-translational modification Phosphoserine. Position 515 is a phosphotyrosine; by INSR, SRC and LCK (Tyr515). The interval 515-518 (YSEV) is essential for interaction with PTPN11 and PTPN6.

Belongs to the immunoglobulin superfamily. CEA family. As to quaternary structure, (Microbial infection) Interacts with MHV S1 spike glycoprotein. In terms of assembly, monomer. Oligomer. Heterodimer. Homodimer. Cis-dimer/oligomer (via Ig-like C2-type and/or via cytoplasmic domains); induced by trans-homophilic cell adhesion through an allosteric mechanism transmitted by the Ig-like V-type domain, and is regulated by intracellular calcium and calmodulin. Interacts (via cytoplasmic domain) with calmodulin in a calcium dependent manner; reduces homophilic cell adhesion through dissociation of dimer. Isoform 1 interacts (via cytoplasmic domain) with PTPN11 (preferentially) and PTPN6; cis-homodimer form is preferred; this interaction is decreased by formation of isoform 1 / isoform 2 cis-heterodimers and is dependent on the monomer/dimer equilibrium; this interaction is phosphorylation-dependent. Isoform 1 interacts with LYN. Isoform 1 interacts (via cytoplasmic domain) with SRC (via SH2 domain); this interaction is regulated by trans-homophilic cell adhesion. Isoform 1 interacts with LCK; mediates phosphorylation at Tyr-488 and Tyr-515 resulting in PTPN6 association. Isoform 1 interacts with PTPN6; this interaction is phosphorylation-dependent and causes a profound decrease in TCR stimulation-induced CD247 and ZAP70 phosphorylation. Isoform 1 interacts with TCR/CD3 complex through TCR beta chain and CD3E; colocalizes at the cell surface and upon stimulation of the TCR/CD3 complex recruits PTPN6 in the TCR/CD3 complex, resulting in dephosphorylation of CD247 and ZAP70. Isoform 1 interacts (via cytoplasmic domain) with SHC1 (via SH2 domain); SHC1 mediates interaction with INSR or EGFR in a Ser-503 phosphorylation-dependent manner. Isoform 1 interacts with EGFR; the interaction is indirect. Isoform 1 interacts with CSF3R; down-regulates the CSF3R-STAT3 pathway through recruitment of PTPN6 that dephosphorylates CSF3R. Isoform 1 (phosphorylated form) interacts with TLR4 and SYK; recruits PTPN6 that dephosphorylates SYK, reducing the production of reactive oxygen species (ROS) and lysosome disruption, leading to a reduction of the inflammasome activity. Isoform 1 interacts with FLNA; inhibits cell migration and cell scattering by interfering with the interaction of FLNA with RALA. Isoform 1 interacts (via cytoplasmic domain) with PXN; the interaction is phosphotyrosyl-dependent. Isoform 1 interacts with KLRK1; recruits PTPN6 that dephosphorylates VAV1. Isoform 1 interacts with CEACAM8. Isoform 1 interacts with FASN; this interaction is insulin and phosphorylation-dependent; reduces fatty-acid synthase activity. Interacts (via Ig-like V-type) with HAVCR2 (via Ig-like V-type); facilitates the maturation and cell surface expression of HAVCR2 thereby regulating T-cell tolerance induction. Isoform 2 interacts (via the cytoplasmic domain) with ANXA2; this interaction is regulated by phosphorylation and appears in the AIIt complex. Interacts (via Lewis X moieties) with CD209 (via C-type lectin domain); this interaction is regulated by the glycosylation pattern of CEACAM1 on cell types and regulates contact between dendritic cells and neutrophils. Phosphorylated on serine and tyrosine. Isoform 1 is phosphorylated on tyrosine by Src family kinases like SRC and LCK and by receptor like CSF3R, EGFR and INSR upon stimulation. Phosphorylated at Ser-503; mediates activity. Phosphorylated at Tyr-488; regulates activity. Phosphorylated at Tyr-488 by EGFR and INSR upon stimulation; this phosphorylation is Ser-503-phosphorylation-dependent; mediates cellular internalization; increases interaction with FASN. Phosphorylated at Tyr-488 and Tyr-515 by LCK; mediates PTPN6 association and is regulated by homophilic ligation of CEACAM1 in the absence of T-cell activation. Phosphorylated at Tyr-515; mediates interaction with PTPN11. Post-translationally, phosphorylated on serine and threonine. Expressed in granulocytes, lymphocytes, granulocytes, B cells, and T-cells. Expressed in bone. Highly expressed in liver and femur. Highly expressed in neutrophils, and to a lesser extent inmonocytes, and macrophages. Slightly higher expressed in peripheral blood neutrophils (PBNs). Intestinal T-cells predominantly express isoform 2 while extraintestinal T-cells mainly express isoform 1. Expressed in small intestine and colon.

The protein resides in the cell membrane. Its subcellular location is the lateral cell membrane. It localises to the apical cell membrane. It is found in the basal cell membrane. The protein localises to the cell junction. The protein resides in the adherens junction. Its subcellular location is the cytoplasmic vesicle. It localises to the secretory vesicle. It is found in the cell projection. The protein localises to the microvillus membrane. Functionally, cell adhesion protein that mediates homophilic cell adhesion in a calcium-independent manner. Plays a role as coinhibitory receptor in immune response, insulin action and also functions as an activator during angiogenesis. Its coinhibitory receptor function is phosphorylation- and PTPN6 -dependent, which in turn, suppress signal transduction of associated receptors by dephosphorylation of their downstream effectors. Plays a role in immune response, of T-cells, natural killer (NK) and neutrophils. Upon TCR/CD3 complex stimulation, inhibits TCR-mediated cytotoxicity by blocking granule exocytosis by mediating homophilic binding to adjacent cells, allowing interaction with and phosphorylation by LCK and interaction with the TCR/CD3 complex which recruits PTPN6 resulting in dephosphorylation of CD247 and ZAP70. Also inhibits T-cell proliferation and cytokine production through inhibition of JNK cascade and plays a crucial role in regulating autoimmunity and anti-tumor immunity by inhibiting T-cell through its interaction with HAVCR2. Upon natural killer (NK) cells activation, inhibit KLRK1-mediated cytolysis of CEACAM1-bearing tumor cells by trans-homophilic interactions with CEACAM1 on the target cell and lead to cis-interaction between CEACAM1 and KLRK1, allowing PTPN6 recruitment and then VAV1 dephosphorylation. Upon neutrophils activation negatively regulates IL1B production by recruiting PTPN6 to a SYK-TLR4-CEACAM1 complex, that dephosphorylates SYK, reducing the production of reactive oxygen species (ROS) and lysosome disruption, which in turn, reduces the activity of the inflammasome. Down-regulates neutrophil production by acting as a coinhibitory receptor for CSF3R by downregulating the CSF3R-STAT3 pathway through recruitment of PTPN6 that dephosphorylates CSF3R. Also regulates insulin action by promoting INS clearance and regulating lipogenesis in liver through regulating insulin signaling. Upon INS stimulation, undergoes phosphorylation by INSR leading to INS clearance by increasing receptor-mediated insulin endocytosis. This inernalization promotes interaction with FASN leading to receptor-mediated insulin degradation and to reduction of FASN activity leading to negative regulation of fatty acid synthesis. INSR-mediated phosphorylation also provokes a down-regulation of cell proliferation through SHC1 interaction resulting in decrease coupling of SHC1 to the MAPK3/ERK1-MAPK1/ERK2 and phosphatidylinositol 3-kinase pathways. Functions as activator in angiogenesis by promoting blood vessel remodeling through endothelial cell differentiation and migration and in arteriogenesis by increasing the number of collateral arteries and collateral vessel calibers after ischemia. Also regulates vascular permeability through the VEGFR2 signaling pathway resulting in control of nitric oxide production. Down-regulates cell growth in response to EGF through its interaction with SHC1 that mediates interaction with EGFR resulting in decrease coupling of SHC1 to the MAPK3/ERK1-MAPK1/ERK2 pathway. Negatively regulates platelet aggregation by decreasing platelet adhesion on type I collagen through the GPVI-FcRgamma complex. Inhibits cell migration and cell scattering through interaction with FLNA; interferes with the interaction of FLNA with RALA. Mediates bile acid transport activity in a phosphorylation dependent manner. Negatively regulates osteoclastogenesis. Its function is as follows. Cell adhesion protein that mediates homophilic cell adhesion in a calcium-independent manner. Promotes populations of T-cells regulating IgA production and secretion associated with control of the commensal microbiota and resistance to enteropathogens. (Microbial infection) In case of murine coronavirus (MHV) infection, serves as receptor for MHV S1 spike glycoprotein. In Mus musculus (Mouse), this protein is Cell adhesion molecule CEACAM1.